Reading from the N-terminus, the 500-residue chain is Enolase (500 aa).

Substrate-binding residues include H225 and E234. The active-site Proton donor is E277. Residues D312, E361, and D386 each contribute to the Mg(2+) site. Residues E361 and D386 each contribute to the substrate site. K411 functions as the Proton acceptor in the catalytic mechanism. Substrate-binding positions include 438–441 and K462; that span reads SHRS.

It belongs to the enolase family. In terms of assembly, homodimer. The cofactor is Mg(2+).

The protein resides in the cytoplasm. It catalyses the reaction (2R)-2-phosphoglycerate = phosphoenolpyruvate + H2O. Its pathway is carbohydrate degradation; glycolysis; pyruvate from D-glyceraldehyde 3-phosphate: step 4/5. Its function is as follows. Enzyme of the glycolytic pathway. Glycolysis is essential in glial cells but not in neurons; neurons rely on the citric acid cycle for their energy needs, and on lactate and alanine secreted into the hemolymph by glial cells to fuel it. This is Enolase from Drosophila melanogaster (Fruit fly).